Here is a 304-residue protein sequence, read N- to C-terminus: Oxygen-dependent coproporphyrinogen-III oxidase (304 aa).

Substrate is bound at residue S94. 2 residues coordinate a divalent metal cation: H98 and H108. H108 functions as the Proton donor in the catalytic mechanism. A substrate-binding site is contributed by 110–112 (NVR). A divalent metal cation is bound by residues H147 and H177. Positions 242–277 (YVEFNLVYDRGTLFGLQTGGRTESILMSMPPLVRWE) are important for dimerization. 260 to 262 (GGR) is a substrate binding site.

It belongs to the aerobic coproporphyrinogen-III oxidase family. In terms of assembly, homodimer. The cofactor is a divalent metal cation.

Its subcellular location is the cytoplasm. It catalyses the reaction coproporphyrinogen III + O2 + 2 H(+) = protoporphyrinogen IX + 2 CO2 + 2 H2O. It participates in porphyrin-containing compound metabolism; protoporphyrin-IX biosynthesis; protoporphyrinogen-IX from coproporphyrinogen-III (O2 route): step 1/1. In terms of biological role, involved in the heme biosynthesis. Catalyzes the aerobic oxidative decarboxylation of propionate groups of rings A and B of coproporphyrinogen-III to yield the vinyl groups in protoporphyrinogen-IX. This is Oxygen-dependent coproporphyrinogen-III oxidase from Shewanella piezotolerans (strain WP3 / JCM 13877).